The following is a 203-amino-acid chain: MKEAELSATESQDEIPKSNSLLIIEKLTKAVCSLYFINCFMVPSVDNLIEKYPKAIIIKIIDMILGAVTISLVIIVFFLYRKNGHFKNENKTKPKRCSKVVCPSCAARKKYPKWFQLKYLLLVSMTAFSFYFCTKIRFFFKTDQTINLHRLSQLFRLQLGWICTTALLFYFYDALILHSGFIEGYRCVNGKGAMSEGKTGQLN.

The next 3 helical transmembrane spans lie at 60-80 (IIDM…FFLY), 114-134 (WFQL…YFCT), and 157-177 (LQLG…ALIL). ATP is bound at residue 192–199 (GAMSEGKT).

The protein resides in the membrane. This is an uncharacterized protein from Saccharomyces cerevisiae (strain ATCC 204508 / S288c) (Baker's yeast).